The chain runs to 102 residues: Small ribosomal subunit protein uS10 (102 aa).

Belongs to the universal ribosomal protein uS10 family. Part of the 30S ribosomal subunit.

Its function is as follows. Involved in the binding of tRNA to the ribosomes. This Beijerinckia indica subsp. indica (strain ATCC 9039 / DSM 1715 / NCIMB 8712) protein is Small ribosomal subunit protein uS10.